Consider the following 286-residue polypeptide: Small ribosomal subunit protein uS3 (286 aa).

Residues 39-107 form the KH type-2 domain; it reads VREYLKKKLA…PVHVNIEEIR (69 aa). Residues 213-286 are disordered; the sequence is QAGAGTAAPQ…KPGVNDAAAS (74 aa). Positions 241-262 are enriched in basic and acidic residues; it reads GRADARSDGKAGEKKGPRKSDN.

Belongs to the universal ribosomal protein uS3 family. As to quaternary structure, part of the 30S ribosomal subunit. Forms a tight complex with proteins S10 and S14.

Functionally, binds the lower part of the 30S subunit head. Binds mRNA in the 70S ribosome, positioning it for translation. The sequence is that of Small ribosomal subunit protein uS3 from Nitrosospira multiformis (strain ATCC 25196 / NCIMB 11849 / C 71).